We begin with the raw amino-acid sequence, 560 residues long: 5'-nucleotidase (560 aa).

An N-terminal signal peptide occupies residues Met-1–Gly-21. Cys-22 carries the N-palmitoyl cysteine lipid modification. A lipid anchor (S-diacylglycerol cysteine) is attached at Cys-22. A divalent metal cation-binding residues include Asp-45, His-47, Asp-88, Asn-120, His-221, His-256, and Gln-258. Substrate is bound by residues Phe-432 and Tyr-501–Asp-507.

This sequence belongs to the 5'-nucleotidase family. Chloride serves as cofactor. The cofactor is Mg(2+).

The protein resides in the cell outer membrane. The enzyme catalyses a ribonucleoside 5'-phosphate + H2O = a ribonucleoside + phosphate. Functionally, degradation of extracellular 5'-nucleotides for nutritional needs. This is 5'-nucleotidase (nutA) from Vibrio parahaemolyticus serotype O3:K6 (strain RIMD 2210633).